A 157-amino-acid chain; its full sequence is MKQSIFEVLIYLFENYLANDDEPSPDRDSLESELFEAGFTPLEIRKAFDWLDGLADSRNMPATVTGDRAIRVYHERETVRLDVESRGFILFLEQAGILDRAGRELVIDRLMALEDDDVDLDTVKWVVLMVLFNQPGQEEAFNWMEDLLFDNPVHLVH.

This sequence belongs to the Smg family.

The chain is Protein Smg homolog from Alkalilimnicola ehrlichii (strain ATCC BAA-1101 / DSM 17681 / MLHE-1).